A 387-amino-acid polypeptide reads, in one-letter code: F-box protein At5g41490 (387 aa).

Residues 2-47 (ATMITNLRRDLIEEIISRVPLRSMKAVRLTCKSWNNISKSEIFTKM) form the F-box domain.

This chain is F-box protein At5g41490, found in Arabidopsis thaliana (Mouse-ear cress).